The primary structure comprises 1138 residues: Exportin-6-B (1138 aa).

The Importin N-terminal domain occupies 31 to 97 (IESLLNNFAQ…RSSLPKLLLS (67 aa)). Positions 291-307 (SVTTNTTSSVVNGGSSS) are enriched in low complexity. The disordered stretch occupies residues 291-315 (SVTTNTTSSVVNGGSSSPPLHSAAP).

Belongs to the exportin family.

It is found in the nucleus. The protein resides in the cytoplasm. Functionally, mediates the nuclear export of actin and profilin-actin complexes in somatic cells. Oocyte nuclei lack active actin export. In terms of biological role, mediates the nuclear export of actin and profilin-actin complexes in somatic cells. In Xenopus laevis (African clawed frog), this protein is Exportin-6-B (xpo6-b).